Consider the following 102-residue polypeptide: Urease subunit beta (102 aa).

The protein belongs to the urease beta subunit family. Heterotrimer of UreA (gamma), UreB (beta) and UreC (alpha) subunits. Three heterotrimers associate to form the active enzyme.

The protein localises to the cytoplasm. The enzyme catalyses urea + 2 H2O + H(+) = hydrogencarbonate + 2 NH4(+). It participates in nitrogen metabolism; urea degradation; CO(2) and NH(3) from urea (urease route): step 1/1. The polypeptide is Urease subunit beta (Pseudomonas syringae pv. tomato (strain ATCC BAA-871 / DC3000)).